The primary structure comprises 377 residues: Glutamate 5-kinase (377 aa).

An ATP-binding site is contributed by K17. S56, D143, and N155 together coordinate substrate. Residue 217–223 (SGGMFSK) participates in ATP binding. One can recognise a PUA domain in the interval 282–360 (AGDLVIDDGA…CEIESILGKC (79 aa)).

Belongs to the glutamate 5-kinase family.

Its subcellular location is the cytoplasm. It catalyses the reaction L-glutamate + ATP = L-glutamyl 5-phosphate + ADP. It functions in the pathway amino-acid biosynthesis; L-proline biosynthesis; L-glutamate 5-semialdehyde from L-glutamate: step 1/2. Catalyzes the transfer of a phosphate group to glutamate to form L-glutamate 5-phosphate. The sequence is that of Glutamate 5-kinase from Maridesulfovibrio salexigens (strain ATCC 14822 / DSM 2638 / NCIMB 8403 / VKM B-1763) (Desulfovibrio salexigens).